A 282-amino-acid polypeptide reads, in one-letter code: Energy-coupling factor transporter ATP-binding protein EcfA1 (282 aa).

The ABC transporter domain maps to 6 to 243; it reads VTVKHLSFTY…EVLIKSAGLE (238 aa). 40–47 contributes to the ATP binding site; that stretch reads GHNGSGKS.

Belongs to the ABC transporter superfamily. Energy-coupling factor EcfA family. As to quaternary structure, forms a stable energy-coupling factor (ECF) transporter complex composed of 2 membrane-embedded substrate-binding proteins (S component), 2 ATP-binding proteins (A component) and 2 transmembrane proteins (T component).

Its subcellular location is the cell membrane. Functionally, ATP-binding (A) component of a common energy-coupling factor (ECF) ABC-transporter complex. Unlike classic ABC transporters this ECF transporter provides the energy necessary to transport a number of different substrates. The protein is Energy-coupling factor transporter ATP-binding protein EcfA1 of Lactobacillus johnsonii (strain CNCM I-12250 / La1 / NCC 533).